The following is a 490-amino-acid chain: Betaine aldehyde dehydrogenase (490 aa).

Residues I27 and D93 each coordinate K(+). An NAD(+)-binding site is contributed by 150-152 (GAW). K162 acts as the Charge relay system in catalysis. An NAD(+)-binding site is contributed by 176-179 (KPSE). V180 is a binding site for K(+). 230 to 233 (GTDT) is an NAD(+) binding site. L246 is a binding site for K(+). Residue E252 is the Proton acceptor of the active site. Residues G254, C286, and E387 each coordinate NAD(+). The Nucleophile role is filled by C286. At C286 the chain carries Cysteine sulfenic acid (-SOH). Positions 457 and 460 each coordinate K(+). E464 (charge relay system) is an active-site residue.

It belongs to the aldehyde dehydrogenase family. Dimer of dimers. K(+) is required as a cofactor.

It catalyses the reaction betaine aldehyde + NAD(+) + H2O = glycine betaine + NADH + 2 H(+). Its pathway is amine and polyamine biosynthesis; betaine biosynthesis via choline pathway; betaine from betaine aldehyde: step 1/1. Involved in the biosynthesis of the osmoprotectant glycine betaine. Catalyzes the irreversible oxidation of betaine aldehyde to the corresponding acid. In Pseudomonas fluorescens (strain SBW25), this protein is Betaine aldehyde dehydrogenase.